A 312-amino-acid chain; its full sequence is DNA-directed RNA polymerase subunit alpha (312 aa).

An alpha N-terminal domain (alpha-NTD) region spans residues 1-226; sequence MIEFEKPNIT…EHFKVFMSTD (226 aa). An alpha C-terminal domain (alpha-CTD) region spans residues 243-312; sequence NEKKLEMTIE…ELGLSLRQDD (70 aa).

Belongs to the RNA polymerase alpha chain family. As to quaternary structure, homodimer. The RNAP catalytic core consists of 2 alpha, 1 beta, 1 beta' and 1 omega subunit. When a sigma factor is associated with the core the holoenzyme is formed, which can initiate transcription.

It carries out the reaction RNA(n) + a ribonucleoside 5'-triphosphate = RNA(n+1) + diphosphate. Functionally, DNA-dependent RNA polymerase catalyzes the transcription of DNA into RNA using the four ribonucleoside triphosphates as substrates. This chain is DNA-directed RNA polymerase subunit alpha, found in Lactobacillus gasseri (strain ATCC 33323 / DSM 20243 / BCRC 14619 / CIP 102991 / JCM 1131 / KCTC 3163 / NCIMB 11718 / NCTC 13722 / AM63).